The primary structure comprises 242 residues: Succinyl-CoA:3-ketoacid coenzyme A transferase subunit A (242 aa).

Residue 33–39 coordinates CoA; it reads GGFGLCG.

Belongs to the 3-oxoacid CoA-transferase subunit A family. Heterodimer of a subunit A and a subunit B.

The catalysed reaction is a 3-oxo acid + succinyl-CoA = a 3-oxoacyl-CoA + succinate. It functions in the pathway bacterial outer membrane biogenesis; lipopolysaccharide biosynthesis. This is Succinyl-CoA:3-ketoacid coenzyme A transferase subunit A (lpsI) from Xanthomonas campestris pv. campestris (strain ATCC 33913 / DSM 3586 / NCPPB 528 / LMG 568 / P 25).